Here is a 256-residue protein sequence, read N- to C-terminus: Probable ATP-dependent transporter slr0075 (256 aa).

Residues Leu6–Glu250 enclose the ABC transporter domain. An ATP-binding site is contributed by Gly38–Ser45.

Belongs to the ABC transporter superfamily. Ycf16 family.

The protein is Probable ATP-dependent transporter slr0075 of Synechocystis sp. (strain ATCC 27184 / PCC 6803 / Kazusa).